We begin with the raw amino-acid sequence, 117 residues long: MFNPYPQKKKRQTRNYTGPWRKTPGRLLGLLLIRFYQITLSGFIGNQCRHLPTCSEYTYEAIARHGLWAGAWMGFFRIIRCGPFGTHGFEPVPTSLGNSYCFYKPWCYWKISTKHNK.

This sequence belongs to the UPF0161 family.

The protein resides in the cell inner membrane. Could be involved in insertion of integral membrane proteins into the membrane. This Bartonella henselae (strain ATCC 49882 / DSM 28221 / CCUG 30454 / Houston 1) (Rochalimaea henselae) protein is Putative membrane protein insertion efficiency factor.